We begin with the raw amino-acid sequence, 187 residues long: MRPTWKALSHPAWPEEKNKQILVLGLDGAGKTSVLHSLASNRVQHSVAPTQGFHAVCINTEDSQMEFLEIGGSKPFRSYWEMYLSKGLLLIFVVDSADHSRLPEAKKYLHQLIAANPVLPLVVFANKQDLEAAYHITDIHEALALSEVGNDRKMFLFGTYLTKNGSEIPSTMQDAKDLIAQLAADVQ.

GTP contacts are provided by residues 25–32 (GLDGAGKT), 69–73 (EIGGS), and 126–129 (NKQD).

The protein belongs to the small GTPase superfamily. Arf family.

The sequence is that of ADP-ribosylation factor-like protein 9 (ARL9) from Homo sapiens (Human).